Reading from the N-terminus, the 425-residue chain is tRNA(Ile)-lysidine synthase (425 aa).

ATP is bound at residue 37 to 42 (SGGKDS).

Belongs to the tRNA(Ile)-lysidine synthase family.

Its subcellular location is the cytoplasm. It carries out the reaction cytidine(34) in tRNA(Ile2) + L-lysine + ATP = lysidine(34) in tRNA(Ile2) + AMP + diphosphate + H(+). Functionally, ligates lysine onto the cytidine present at position 34 of the AUA codon-specific tRNA(Ile) that contains the anticodon CAU, in an ATP-dependent manner. Cytidine is converted to lysidine, thus changing the amino acid specificity of the tRNA from methionine to isoleucine. This Leptospira borgpetersenii serovar Hardjo-bovis (strain JB197) protein is tRNA(Ile)-lysidine synthase.